Reading from the N-terminus, the 104-residue chain is MNALSIPTWMVHVSSVIEWIVAIALVSRYATKAGYGHWRALAWGMVPALVSATCACTWHFFDNASQLDWLVTLQALTTVIGNITLCLAAWWIYRQSAQPSAPKP.

The next 3 membrane-spanning stretches (helical) occupy residues 6–26 (IPTW…IALV), 41–61 (LAWG…WHFF), and 73–93 (LQAL…WWIY).

This sequence belongs to the ycf49 family.

The protein resides in the cell membrane. The chain is Ycf49-like protein from Synechocystis sp. (strain ATCC 27184 / PCC 6803 / Kazusa).